Reading from the N-terminus, the 458-residue chain is Probable ECA polymerase (458 aa).

Helical transmembrane passes span 3-23 (LAQF…VLTL), 37-57 (VFFS…TCLL), 65-85 (VVPV…YAIY), 112-132 (THLT…IFFL), 154-174 (GVAL…VYFL), 180-200 (AWFF…VIVG), 201-221 (GTRA…IVRG), 222-242 (WISL…MFWL), 340-360 (LVVM…GMII), 377-397 (YKAA…IVLA), and 409-429 (VFFC…YWLF).

The protein belongs to the WzyE family. In terms of assembly, probably part of a complex composed of WzxE, WzyE and WzzE.

It localises to the cell inner membrane. The protein operates within bacterial outer membrane biogenesis; enterobacterial common antigen biosynthesis. Functionally, probably involved in the polymerization of enterobacterial common antigen (ECA) trisaccharide repeat units. This is Probable ECA polymerase from Serratia proteamaculans (strain 568).